The primary structure comprises 665 residues: Phenol hydroxylase (665 aa).

Residues 18–19 (PA), 43–45 (DKR), 51–56 (NGQADG), glutamine 118, tyrosine 290, aspartate 358, and 368–372 (GQGMN) contribute to the FAD site. Aspartate 55 contributes to the substrate binding site. Residue tyrosine 290 coordinates substrate.

Belongs to the PheA/TfdB FAD monooxygenase family. As to quaternary structure, homodimer. FAD is required as a cofactor.

The enzyme catalyses phenol + NADPH + O2 + H(+) = catechol + NADP(+) + H2O. The protein operates within aromatic compound metabolism; phenol degradation. Its activity is regulated as follows. Inhibited by excess phenol. Heavy metals such AsCuSO(4), AgNO(3), or HgCl(2) severely inhibit activity. Its function is as follows. Hydroxylates phenol to catechol. Phenol is the best substrate, but the enzyme also accepts isomeric diphenols, hydroxyl-, amino-, halogen- or methyl-substituted phenols and, to a lesser degree, cresols. This chain is Phenol hydroxylase, found in Cutaneotrichosporon cutaneum (Yeast).